Consider the following 351-residue polypeptide: Histidine-rich glycoprotein (351 aa).

A signal peptide spans 1–23; sequence MFTSLKKVATFSFLVWISQYSGS. Positions 24–47 are excised as a propeptide; it reads NSCSSSLVKHIPQTGSNLTFDRVL. N-linked (GlcNAc...) asparagine glycosylation is present at Asn-40. Positions 57 to 91 are enriched in basic and acidic residues; it reads LHEEHHHHHPEEHHEPHHEEHHHHHPEEHHEPHHE. A disordered region spans residues 57-351; that stretch reads LHEEHHHHHP…DAHHHHHHHH (295 aa). A run of 6 repeats spans residues 59–74, 75–90, 91–107, 108–123, 124–138, and 139–153. A 2 X 16 AA tandem repeats region spans residues 59–90; it reads EEHHHHHPEEHHEPHHEEHHHHHPEEHHEPHH. The interval 91 to 123 is 2 X 17 AA tandem repeats; the sequence is EEHHHHHPHPHHHHHHHPPHHHHHLGHHHHHHH. Positions 92–351 are enriched in basic residues; the sequence is EHHHHHPHPH…DAHHHHHHHH (260 aa). A 2 X 15 AA tandem repeats region spans residues 124 to 153; it reads AAHHHHHEEHHHHHHAAHHHHHEEHHHHHH. The segment at 173 to 351 is 18 X 10 AA tandem repeats; it reads APHHHHHHHH…DAHHHHHHHH (179 aa).

The chain is Histidine-rich glycoprotein from Plasmodium lophurae.